Here is a 312-residue protein sequence, read N- to C-terminus: Methionyl-tRNA formyltransferase (312 aa).

Position 109 to 112 (109 to 112) interacts with (6S)-5,6,7,8-tetrahydrofolate; the sequence is SLLP.

Belongs to the Fmt family.

The catalysed reaction is L-methionyl-tRNA(fMet) + (6R)-10-formyltetrahydrofolate = N-formyl-L-methionyl-tRNA(fMet) + (6S)-5,6,7,8-tetrahydrofolate + H(+). Functionally, attaches a formyl group to the free amino group of methionyl-tRNA(fMet). The formyl group appears to play a dual role in the initiator identity of N-formylmethionyl-tRNA by promoting its recognition by IF2 and preventing the misappropriation of this tRNA by the elongation apparatus. This chain is Methionyl-tRNA formyltransferase, found in Anaeromyxobacter dehalogenans (strain 2CP-C).